A 95-amino-acid polypeptide reads, in one-letter code: Acylphosphatase (95 aa).

The Acylphosphatase-like domain maps to 7–95 (CTMAWVYGSV…RSWDKFAILY (89 aa)). Catalysis depends on residues arginine 22 and asparagine 40.

Belongs to the acylphosphatase family.

It carries out the reaction an acyl phosphate + H2O = a carboxylate + phosphate + H(+). The sequence is that of Acylphosphatase (acyP) from Klebsiella pneumoniae subsp. pneumoniae (strain ATCC 700721 / MGH 78578).